The chain runs to 335 residues: Phosphate acyltransferase (335 aa).

It belongs to the PlsX family. As to quaternary structure, homodimer. Probably interacts with PlsY.

Its subcellular location is the cytoplasm. It catalyses the reaction a fatty acyl-[ACP] + phosphate = an acyl phosphate + holo-[ACP]. The protein operates within lipid metabolism; phospholipid metabolism. In terms of biological role, catalyzes the reversible formation of acyl-phosphate (acyl-PO(4)) from acyl-[acyl-carrier-protein] (acyl-ACP). This enzyme utilizes acyl-ACP as fatty acyl donor, but not acyl-CoA. In Streptococcus uberis (strain ATCC BAA-854 / 0140J), this protein is Phosphate acyltransferase.